Reading from the N-terminus, the 230-residue chain is Cytochrome c oxidase subunit 2 (230 aa).

At 1–14 the chain is on the mitochondrial intermembrane side; sequence MAHPSQLGFQDAAS. A helical membrane pass occupies residues 15–45; the sequence is PVMEELLHFHDHALMIVLLISTLVLYIIVAM. The Mitochondrial matrix segment spans residues 46 to 59; the sequence is VSTKLTNKYILDSQ. Residues 60–87 form a helical membrane-spanning segment; that stretch reads EIEIVWTVLPAVILILIALPSLRILYLM. The Mitochondrial intermembrane segment spans residues 88 to 230; that stretch reads DEINDPHLTI…KWSTMMLEDA (143 aa). Cu cation contacts are provided by His-161, Cys-196, Glu-198, Cys-200, His-204, and Met-207. A Mg(2+)-binding site is contributed by Glu-198.

Belongs to the cytochrome c oxidase subunit 2 family. As to quaternary structure, component of the cytochrome c oxidase (complex IV, CIV), a multisubunit enzyme composed of 14 subunits. The complex is composed of a catalytic core of 3 subunits MT-CO1, MT-CO2 and MT-CO3, encoded in the mitochondrial DNA, and 11 supernumerary subunits COX4I, COX5A, COX5B, COX6A, COX6B, COX6C, COX7A, COX7B, COX7C, COX8 and NDUFA4, which are encoded in the nuclear genome. The complex exists as a monomer or a dimer and forms supercomplexes (SCs) in the inner mitochondrial membrane with NADH-ubiquinone oxidoreductase (complex I, CI) and ubiquinol-cytochrome c oxidoreductase (cytochrome b-c1 complex, complex III, CIII), resulting in different assemblies (supercomplex SCI(1)III(2)IV(1) and megacomplex MCI(2)III(2)IV(2)). Found in a complex with TMEM177, COA6, COX18, COX20, SCO1 and SCO2. Interacts with TMEM177 in a COX20-dependent manner. Interacts with COX20. Interacts with COX16. It depends on Cu cation as a cofactor.

The protein resides in the mitochondrion inner membrane. It catalyses the reaction 4 Fe(II)-[cytochrome c] + O2 + 8 H(+)(in) = 4 Fe(III)-[cytochrome c] + 2 H2O + 4 H(+)(out). In terms of biological role, component of the cytochrome c oxidase, the last enzyme in the mitochondrial electron transport chain which drives oxidative phosphorylation. The respiratory chain contains 3 multisubunit complexes succinate dehydrogenase (complex II, CII), ubiquinol-cytochrome c oxidoreductase (cytochrome b-c1 complex, complex III, CIII) and cytochrome c oxidase (complex IV, CIV), that cooperate to transfer electrons derived from NADH and succinate to molecular oxygen, creating an electrochemical gradient over the inner membrane that drives transmembrane transport and the ATP synthase. Cytochrome c oxidase is the component of the respiratory chain that catalyzes the reduction of oxygen to water. Electrons originating from reduced cytochrome c in the intermembrane space (IMS) are transferred via the dinuclear copper A center (CU(A)) of subunit 2 and heme A of subunit 1 to the active site in subunit 1, a binuclear center (BNC) formed by heme A3 and copper B (CU(B)). The BNC reduces molecular oxygen to 2 water molecules using 4 electrons from cytochrome c in the IMS and 4 protons from the mitochondrial matrix. The sequence is that of Cytochrome c oxidase subunit 2 (mt-co2) from Salmo salar (Atlantic salmon).